A 1456-amino-acid polypeptide reads, in one-letter code: Macrophage mannose receptor 1 (1456 aa).

Residues 1–18 form the signal peptide; the sequence is MRLPLLLVFASVIPGAVL. The Extracellular segment spans residues 19 to 1389; it reads LLDTRQFLIY…DPSKPSSNVA (1371 aa). The region spanning 22 to 142 is the Ricin B-type lectin domain; sequence TRQFLIYNED…SGLWSRWKIY (121 aa). Disulfide bonds link Cys-35–Cys-49 and Cys-74–Cys-91. Asn-104 carries N-linked (GlcNAc...) asparagine glycosylation. A Fibronectin type-II domain is found at 163-211; it reads ANGATCAFPFKFENKWYADCTSAGRSDGWLWCGTTTDYDTDKLFGYCPL. 4 cysteine pairs are disulfide-bonded: Cys-168–Cys-194, Cys-182–Cys-209, Cys-247–Cys-340, and Cys-316–Cys-332. The C-type lectin 1 domain maps to 225-341; it reads LTSVSYQINS…CVQKLGYICK (117 aa). An N-linked (GlcNAc...) asparagine glycan is attached at Asn-344. C-type lectin domains follow at residues 369–487, 511–626, 655–778, and 807–923; these read YAGH…YICK, HHFY…FVCK, RTSL…WICQ, and YKDY…FICQ. 2 disulfide bridges follow: Cys-391–Cys-486 and Cys-463–Cys-478. Asn-529 is a glycosylation site (N-linked (GlcNAc...) asparagine). Intrachain disulfides connect Cys-532–Cys-625, Cys-600–Cys-617, Cys-646–Cys-659, Cys-680–Cys-777, Cys-753–Cys-769, Cys-828–Cys-922, and Cys-899–Cys-914. N-linked (GlcNAc...) asparagine glycosylation is found at Asn-926 and Asn-930. C-type lectin domains are found at residues 952-1080, 1102-1213, and 1241-1356; these read YSNK…YICQ, YGKS…FLCK, and FHGH…YICK. 6 cysteine pairs are disulfide-bonded: Cys-977–Cys-1079, Cys-1052–Cys-1071, Cys-1123–Cys-1212, Cys-1190–Cys-1204, Cys-1263–Cys-1355, and Cys-1332–Cys-1347. N-linked (GlcNAc...) asparagine glycosylation is present at Asn-1160. Residue Asn-1205 is glycosylated (N-linked (GlcNAc...) asparagine). The helical transmembrane segment at 1390–1410 threads the bilayer; the sequence is GVVIIVILLILTGAGLAAYFF. Over 1411-1456 the chain is Cytoplasmic; it reads YKKRRVHLPQEGAFENTLYFNSQSSPGTSDMKDLVGNIEQNEHSVI.

(Microbial infection) Interacts with Dengue virus. As to quaternary structure, (Microbial infection) May act as a receptor for hepatitis B virus, enabling uptake of the virus in hepatic dendritic cells.

It localises to the endosome membrane. The protein localises to the cell membrane. In terms of biological role, mediates the endocytosis of glycoproteins by macrophages. Binds both sulfated and non-sulfated polysaccharide chains. Functionally, (Microbial infection) Acts as a phagocytic receptor for bacteria, fungi and other pathogens. (Microbial infection) Acts as a receptor for Dengue virus envelope protein E. Its function is as follows. (Microbial infection) Interacts with Hepatitis B virus envelope protein. The protein is Macrophage mannose receptor 1 (MRC1) of Homo sapiens (Human).